We begin with the raw amino-acid sequence, 305 residues long: MELIFLGTSAGVPTRTRNVTAILLNLQHPTQSGLWLFDCGEGTQHQLLHTAFNPGKLDKIFISHLHGDHLFGLPGLLCSRSMSGIIQPLTIYGPQGIREFVETALRISGSWTDYPLEIVEIGAGEILDDGLRKVTAYPLEHPLECYGYRIEEHDKPGALNAQALKAAGVPPGPLFQELKAGKTITLEDGRQINGADYLAAPVPGKALAIFGDTGPCDAALDLAKGVDVMVHEATLDITMEAKANSRGHSSTRQAATLAREAGVGKLIITHVSSRYDDKGCQHLLRECRSIFPATELANDFTVFNV.

Positions 64, 66, 68, 69, 141, 212, and 270 each coordinate Zn(2+). Asp68 acts as the Proton acceptor in catalysis.

The protein belongs to the RNase Z family. RNase BN subfamily. As to quaternary structure, homodimer. The cofactor is Zn(2+).

Zinc phosphodiesterase, which has both exoribonuclease and endoribonuclease activities. The sequence is that of Ribonuclease BN from Shigella flexneri.